The following is a 264-amino-acid chain: Small ribosomal subunit protein eS1B (264 aa).

The span at 1–19 (MALGKNKRISKGGKRGKRG) shows a compositional bias: basic residues. The disordered stretch occupies residues 1 to 23 (MALGKNKRISKGGKRGKRGKAQE).

This sequence belongs to the eukaryotic ribosomal protein eS1 family. In terms of assembly, component of the small ribosomal subunit. Mature ribosomes consist of a small (40S) and a large (60S) subunit. The 40S subunit contains about 33 different proteins and 1 molecule of RNA (18S). The 60S subunit contains about 49 different proteins and 3 molecules of RNA (25S, 5.8S and 5S).

The protein resides in the cytoplasm. The protein is Small ribosomal subunit protein eS1B of Leishmania infantum.